The sequence spans 161 residues: Long arms of the bivalent protein 1 (161 aa).

A PP1 binding motif motif is present at residues 72 to 75 (KVIW). Positions 85–161 (GTMFEDFKED…SDKTMCSGQS (77 aa)) are disordered. The segment covering 97–115 (QESVSSISNNEANWGSSVN) has biased composition (polar residues). The span at 120–129 (NYEKMQKEET) shows a compositional bias: basic and acidic residues. Residues 130–151 (FDPYDSDSDTSEDSDFDEDFED) show a composition bias toward acidic residues.

Interacts with gsp-1 and gsp-2; the interaction is direct.

It localises to the chromosome. Its subcellular location is the nucleus. Involved in sister chromatid cohesion during mitosis and meiosis. In association with the gsp-2 phosphatase, it both restricts the localization and antagonizes the function of the air-2 kinase during meiosis I and mitosis to promote chromatid cohesion and spindle attachment. This in turn, drives germ cell immortality. Furthermore, may play a role in ensuring the timely assembly of the synaptonemal complex during prophase I of meiosis. This Caenorhabditis elegans protein is Long arms of the bivalent protein 1.